The chain runs to 208 residues: UPF0319 protein VSAL_I2129 (208 aa).

The N-terminal stretch at 1-21 is a signal peptide; the sequence is MKFHSFLAAGLCLLTSLSASA.

This sequence belongs to the UPF0319 family.

In Aliivibrio salmonicida (strain LFI1238) (Vibrio salmonicida (strain LFI1238)), this protein is UPF0319 protein VSAL_I2129.